Here is a 1304-residue protein sequence, read N- to C-terminus: Splicing factor 3B subunit 1 (1304 aa).

Disordered stretches follow at residues 100 to 119 and 124 to 148; these read QYDP…EDEY and RTMI…PKMN. The segment covering 104 to 119 has biased composition (basic and acidic residues); that stretch reads FAEHRPPKIADREDEY. Residue T125 is modified to Phosphothreonine. S129 is subject to Phosphoserine. K141 bears the N6-acetyllysine mark. Residue T142 is modified to Phosphothreonine. R157 is modified (citrulline). The segment at 173-360 is disordered; the sequence is AEKAKAGELK…PVLTPGKTPI (188 aa). The segment at 190-342 is U2AF homology region; mediates interaction with RBM39; that stretch reads SQPPSKRKRR…KRKSRWDETP (153 aa). S194 bears the Phosphoserine mark. Phosphothreonine occurs at positions 203, 207, and 211. K214 bears the N6-acetyllysine; alternate mark. K214 is covalently cross-linked (Glycyl lysine isopeptide (Lys-Gly) (interchain with G-Cter in SUMO2); alternate). Phosphothreonine occurs at positions 223 and 227. Residues 223-491 form an interaction with PPP1R8 region; that stretch reads TPGHTPSLRW…VDESTLSPEE (269 aa). S229 is modified (phosphoserine). Positions 231–241 are enriched in basic and acidic residues; sequence RWDETPGRAKG. A phosphothreonine mark is found at T235, T244, T248, T257, T261, T267, T273, and T278. Residue S287 is modified to Phosphoserine. A compositionally biased stretch (basic and acidic residues) spans 291–304; sequence NRWDETPKTERDTP. Phosphothreonine is present on residues T296, T299, T303, and T313. The residue at position 322 (S322) is a Phosphoserine. 2 positions are modified to phosphothreonine: T326 and T328. S332 carries the phosphoserine modification. The residue at position 341 (T341) is a Phosphothreonine. The segment covering 342–352 has biased composition (polar residues); that stretch reads PASQMGGSTPV. A phosphoserine mark is found at S344 and S349. Phosphothreonine is present on residues T350 and T354. S400 is modified (phosphoserine). K413 participates in a covalent cross-link: Glycyl lysine isopeptide (Lys-Gly) (interchain with G-Cter in SUMO2); alternate. A Glycyl lysine isopeptide (Lys-Gly) (interchain with G-Cter in SUMO1); alternate cross-link involves residue K413. At T426 the chain carries Phosphothreonine. Residue K430 forms a Glycyl lysine isopeptide (Lys-Gly) (interchain with G-Cter in SUMO2) linkage. The residue at position 434 (T434) is a Phosphothreonine; by DYRK1A. The residue at position 436 (T436) is a Phosphothreonine. S488 is subject to Phosphoserine. 11 HEAT repeats span residues 529–568, 569–603, 604–641, 643–677, 680–718, 763–801, 843–881, 1010–1048, 1052–1090, 1122–1160, and 1163–1201; these read GPLF…DLVR, PYVH…LAKA, AGLA…ALGI, SLLP…LMGC, LPHL…AATP, NYYT…TDGV, KVGA…NLGA, TPPI…RGAE, AREW…AIGP, TCSP…YIGE, and KDYI…GVYG. An interaction with SF3B14 region spans residues 529–568; the sequence is GPLFNQILPLLMSPTLEDQERHLLVKVIDRILYKLDDLVR. Residues 547–550 form an interaction with PHF5A region; it reads QERH. Residues K554 and K562 each carry the N6-acetyllysine modification. Positions 1156–1157 are interaction with PHF5A; sequence EY. The interaction with SF3B3 and SF3B5 stretch occupies residues 1248-1304; that stretch reads QYCLQGLFHPARKVRDVYWKIYNSIYIGSQDALIAHYPRIYNDDKNTYIRYELDYIL.

It belongs to the SF3B1 family. As to quaternary structure, component of the 17S U2 SnRNP complex, a ribonucleoprotein complex that contains small nuclear RNA (snRNA) U2 and a number of specific proteins. Part of the SF3B subcomplex of the 17S U2 SnRNP complex. SF3B associates with the splicing subcomplex SF3A and a 12S RNA unit to form the U2 small nuclear ribonucleoproteins complex (U2 snRNP). Within the SF3B complex, interacts directly (via HEAT domain) with SF3B3, SF3B5, SF3B6 and (via HEAT domain) with PHF5A. The SF3B subcomplex interacts with U2AF2. Identified in the spliceosome C complex. Component of the minor (U12-type spliceosome) spliceosome. Within the minor spliceosome complex, interacts with SCNM1 and CRIPT. Component of the B-WICH complex, at least composed of SMARCA5/SNF2H, BAZ1B/WSTF, SF3B1, DEK, MYO1C, ERCC6, MYBBP1A and DDX21. Phosphorylated form interacts with PPP1R8. Interacts with PQBP1. Interacts with RBM17. Interacts with RBM39. Interacts with SETX. Interacts with RBM15. Interacts with USH1G. Interacts with SDE2. Interacts with U2AF1. Interacts with CACTIN. Interacts with ZRSR1. Interacts with CYREN. Post-translationally, phosphorylated. Phosphorylation occurs concomitantly with the splicing catalytic steps. Phosphorylation on Thr-244, Thr-248 and Thr-313 by cyclin-dependent kinases promotes interaction with PPP1R8 during mitosis. In terms of processing, citrullinated by PADI4.

The protein resides in the nucleus. The protein localises to the nucleus speckle. Component of the 17S U2 SnRNP complex of the spliceosome, a large ribonucleoprotein complex that removes introns from transcribed pre-mRNAs. The 17S U2 SnRNP complex (1) directly participates in early spliceosome assembly and (2) mediates recognition of the intron branch site during pre-mRNA splicing by promoting the selection of the pre-mRNA branch-site adenosine, the nucleophile for the first step of splicing. Within the 17S U2 SnRNP complex, SF3B1 is part of the SF3B subcomplex, which is required for 'A' complex assembly formed by the stable binding of U2 snRNP to the branchpoint sequence in pre-mRNA. Sequence independent binding of SF3A and SF3B subcomplexes upstream of the branch site is essential, it may anchor U2 snRNP to the pre-mRNA. May also be involved in the assembly of the 'E' complex. Also acts as a component of the minor spliceosome, which is involved in the splicing of U12-type introns in pre-mRNAs. Together with other U2 snRNP complex components may also play a role in the selective processing of microRNAs (miRNAs) from the long primary miRNA transcript, pri-miR-17-92. This chain is Splicing factor 3B subunit 1, found in Homo sapiens (Human).